Reading from the N-terminus, the 568-residue chain is Sulfite reductase [NADPH] hemoprotein beta-component (568 aa).

4 residues coordinate [4Fe-4S] cluster: C426, C432, C471, and C475. Residue C475 participates in siroheme binding.

Belongs to the nitrite and sulfite reductase 4Fe-4S domain family. As to quaternary structure, alpha(8)-beta(8). The alpha component is a flavoprotein, the beta component is a hemoprotein. Siroheme is required as a cofactor. It depends on [4Fe-4S] cluster as a cofactor.

The enzyme catalyses hydrogen sulfide + 3 NADP(+) + 3 H2O = sulfite + 3 NADPH + 4 H(+). The protein operates within sulfur metabolism; hydrogen sulfide biosynthesis; hydrogen sulfide from sulfite (NADPH route): step 1/1. Its function is as follows. Component of the sulfite reductase complex that catalyzes the 6-electron reduction of sulfite to sulfide. This is one of several activities required for the biosynthesis of L-cysteine from sulfate. This chain is Sulfite reductase [NADPH] hemoprotein beta-component, found in Xylella fastidiosa (strain M23).